Reading from the N-terminus, the 124-residue chain is Small ribosomal subunit protein uS12 (124 aa).

3-methylthioaspartic acid is present on Asp89.

This sequence belongs to the universal ribosomal protein uS12 family. As to quaternary structure, part of the 30S ribosomal subunit. Contacts proteins S8 and S17. May interact with IF1 in the 30S initiation complex.

With S4 and S5 plays an important role in translational accuracy. Its function is as follows. Interacts with and stabilizes bases of the 16S rRNA that are involved in tRNA selection in the A site and with the mRNA backbone. Located at the interface of the 30S and 50S subunits, it traverses the body of the 30S subunit contacting proteins on the other side and probably holding the rRNA structure together. The combined cluster of proteins S8, S12 and S17 appears to hold together the shoulder and platform of the 30S subunit. In Shewanella frigidimarina (strain NCIMB 400), this protein is Small ribosomal subunit protein uS12.